A 510-amino-acid chain; its full sequence is ATP synthase subunit alpha (510 aa).

An ATP-binding site is contributed by 170–177 (GDRQTGKT).

This sequence belongs to the ATPase alpha/beta chains family. F-type ATPases have 2 components, CF(1) - the catalytic core - and CF(0) - the membrane proton channel. CF(1) has five subunits: alpha(3), beta(3), gamma(1), delta(1), epsilon(1). CF(0) has three main subunits: a(1), b(2) and c(9-12). The alpha and beta chains form an alternating ring which encloses part of the gamma chain. CF(1) is attached to CF(0) by a central stalk formed by the gamma and epsilon chains, while a peripheral stalk is formed by the delta and b chains.

It localises to the cell inner membrane. The catalysed reaction is ATP + H2O + 4 H(+)(in) = ADP + phosphate + 5 H(+)(out). Produces ATP from ADP in the presence of a proton gradient across the membrane. The alpha chain is a regulatory subunit. This is ATP synthase subunit alpha from Caulobacter vibrioides (strain ATCC 19089 / CIP 103742 / CB 15) (Caulobacter crescentus).